The following is a 172-amino-acid chain: MDRAEKSELVTHLNGVFANAGVVVVAHYSGLTVNQMSDLRSRMAKAGASFKVTKNRLAKLALDGTPMTEIGDLFAGPTAIAYSQDPVAAPKVAIEFAKENQKLVILGGAMGQTVLDAKAVKQLADLPSLDELRAKIVGMIQTPATRIAGVLQAPGGQLARVLNAYATKSEAA.

This sequence belongs to the universal ribosomal protein uL10 family. Part of the ribosomal stalk of the 50S ribosomal subunit. The N-terminus interacts with L11 and the large rRNA to form the base of the stalk. The C-terminus forms an elongated spine to which L12 dimers bind in a sequential fashion forming a multimeric L10(L12)X complex.

Forms part of the ribosomal stalk, playing a central role in the interaction of the ribosome with GTP-bound translation factors. The chain is Large ribosomal subunit protein uL10 from Parvibaculum lavamentivorans (strain DS-1 / DSM 13023 / NCIMB 13966).